We begin with the raw amino-acid sequence, 354 residues long: 3'-5' exonuclease (354 aa).

The segment at 1 to 120 (MERFLTKMPI…PSPEKEKPEK (120 aa)) is disordered. Basic and acidic residues-rich tracts occupy residues 13–30 (KANE…ETPK) and 37–50 (KKDT…KENA). A compositionally biased stretch (basic residues) spans 59–70 (TKGRPGRPAAKR). Basic and acidic residues predominate over residues 71 to 91 (KNLDTPDVKDEKIAMEEENPP). Residues S104, S110, and S112 each carry the phosphoserine modification. The 166-residue stretch at 149–314 (WVEKQKDDVV…GQVIYRELER (166 aa)) folds into the 3'-5' exonuclease domain. D163, E165, and D301 together coordinate Mg(2+).

The protein belongs to the WRNexo family.

The protein localises to the nucleus. Its function is as follows. Has exonuclease activity on both single-stranded and duplex templates bearing overhangs, but not blunt ended duplex DNA, and cleaves in a 3'-5' direction. Essential for the formation of DNA replication focal centers. Has an important role in maintaining genome stability. This is 3'-5' exonuclease from Drosophila simulans (Fruit fly).